Consider the following 119-residue polypeptide: Ribonuclease P protein component (119 aa).

The protein belongs to the RnpA family. As to quaternary structure, consists of a catalytic RNA component (M1 or rnpB) and a protein subunit.

It catalyses the reaction Endonucleolytic cleavage of RNA, removing 5'-extranucleotides from tRNA precursor.. RNaseP catalyzes the removal of the 5'-leader sequence from pre-tRNA to produce the mature 5'-terminus. It can also cleave other RNA substrates such as 4.5S RNA. The protein component plays an auxiliary but essential role in vivo by binding to the 5'-leader sequence and broadening the substrate specificity of the ribozyme. The chain is Ribonuclease P protein component from Aromatoleum aromaticum (strain DSM 19018 / LMG 30748 / EbN1) (Azoarcus sp. (strain EbN1)).